The chain runs to 417 residues: MFTRDMKIAGFDDELWNAMQAEEKRQEAHIELIASENYTSPRVMEAQGSVLTNKYAEGYPGKRYYGGCEFVDIAEDLAIARAKELFGAAYANVQPHSGSQANSAVFMALLKPGDTVLGMSLAHGGHLTHGASVNFSGKIYSAVQYGLNPETGLIDYDEVEALAVEHKPKMIIAGFSAYSQELDFARFRAIADKVGAYLFVDMAHVAGLVAAGVYPDPVPHAHVVATTTHKTLRGPRGGLILACDDEDLQKKLNSAVFPGGQGGPLMHVIAAKAVCFKEAMSDEFKAYQQQVVKNAAAMAEVFIERGFDVVSGGTKNHLFLVSLIKQDITGKDADAALGKAHITVNKNAVPNDPRSPFVTSGLRIGTPAVTTRGFKEAECRNLAGWMCDILDNLEDEAVNSRVREQVEAVCARFPVYG.

(6S)-5,6,7,8-tetrahydrofolate-binding positions include Leu-121 and 125-127; that span reads GHL. The residue at position 230 (Lys-230) is an N6-(pyridoxal phosphate)lysine. 355–357 contributes to the (6S)-5,6,7,8-tetrahydrofolate binding site; that stretch reads SPF.

Belongs to the SHMT family. As to quaternary structure, homodimer. Requires pyridoxal 5'-phosphate as cofactor.

It localises to the cytoplasm. It carries out the reaction (6R)-5,10-methylene-5,6,7,8-tetrahydrofolate + glycine + H2O = (6S)-5,6,7,8-tetrahydrofolate + L-serine. It participates in one-carbon metabolism; tetrahydrofolate interconversion. Its pathway is amino-acid biosynthesis; glycine biosynthesis; glycine from L-serine: step 1/1. Its function is as follows. Catalyzes the reversible interconversion of serine and glycine with tetrahydrofolate (THF) serving as the one-carbon carrier. This reaction serves as the major source of one-carbon groups required for the biosynthesis of purines, thymidylate, methionine, and other important biomolecules. Also exhibits THF-independent aldolase activity toward beta-hydroxyamino acids, producing glycine and aldehydes, via a retro-aldol mechanism. The sequence is that of Serine hydroxymethyltransferase from Marinobacter nauticus (strain ATCC 700491 / DSM 11845 / VT8) (Marinobacter aquaeolei).